The chain runs to 494 residues: UPF0371 protein M28_Spy1076 (494 aa).

It belongs to the UPF0371 family.

This Streptococcus pyogenes serotype M28 (strain MGAS6180) protein is UPF0371 protein M28_Spy1076.